Reading from the N-terminus, the 1131-residue chain is Chitin synthase 1 (1131 aa).

Residues 1–20 (MSDQNNRSRNEYHSNRKNEP) are compositionally biased toward basic and acidic residues. A disordered region spans residues 1–22 (MSDQNNRSRNEYHSNRKNEPSY). A phosphoserine mark is found at serine 34, serine 35, serine 270, serine 299, and serine 318. Positions 282–305 (YLHDDSRPVNDGKEELDSVKSGYS) are disordered. A Phosphothreonine modification is found at threonine 328. Serine 358 bears the Phosphoserine mark. 7 helical membrane-spanning segments follow: residues 795–815 (FFYL…FFLV), 833–853 (VLSV…FILS), 866–886 (VLTC…SIFM), 914–934 (IVIS…IYLQ), 942–962 (FIQY…YAFC), 1042–1062 (LVII…LETG), and 1101–1121 (ILWL…IYMI).

Belongs to the chitin synthase family.

It is found in the cell membrane. The catalysed reaction is [(1-&gt;4)-N-acetyl-beta-D-glucosaminyl](n) + UDP-N-acetyl-alpha-D-glucosamine = [(1-&gt;4)-N-acetyl-beta-D-glucosaminyl](n+1) + UDP + H(+). With respect to regulation, requires proteolytic activation. Polymerizes chitin, a structural polymer of the cell wall and septum, by transferring the sugar moiety of UDP-GlcNAc to the non-reducing end of the growing chitin polymer. Required for mitotic division septum formation during adverse conditions. The sequence is that of Chitin synthase 1 (CHS1) from Saccharomyces cerevisiae (strain ATCC 204508 / S288c) (Baker's yeast).